We begin with the raw amino-acid sequence, 333 residues long: MTDQAFVTLTTNDAYAKGALVLGSSLKQHRTTRRMVVLTSPQVSDSMRKVLETVFDDVIMVDVLDSGDSAHLTLMKRPELGITLTKLHCWSLTQYSKCVFMDADTLVLSNIDDLFEREELSAAPDPGWPDCFNSGVFVYQPSIETYNQLLHLASEQGSFDGGDQGLLNTYFSGWATTDITKHLPFVYNLSSISIYSYLPAFKAFGKNAKVVHFLGRTKPWNYTYNPQTKSVNCDSQDPTVSHPEFLNLWWDTFTTNVLPLLQHHGLVKDASSYLMMEHVSGALSDLSFGEAPAAPQPSMSSEERKERWEQGQADYMGADSFDNIKRKLDTYLQ.

Residue T2 is modified to N-acetylthreonine. L9, T11, N12, and Y15 together coordinate UDP. UDP-alpha-D-glucose is bound by residues L9, T11, N12, and Y15. S44 carries the post-translational modification Phosphoserine. Residue R77 participates in UDP binding. The UDP-alpha-D-glucose site is built by R77, K86, D102, A103, D104, N133, S134, D160, D163, and Q164. The UDP site is built by D102, A103, and D104. D102 lines the Mn(2+) pocket. D104 lines the Mn(2+) pocket. Residue Y195 is glycosylated (O-linked (Glc...) tyrosine). The UDP site is built by H212, G215, and K218. A Mn(2+)-binding site is contributed by H212. Residues G215 and K218 each contribute to the UDP-alpha-D-glucose site. The tract at residues 284 to 316 (SDLSFGEAPAAPQPSMSSEERKERWEQGQADYM) is interaction with GYS1. Residues 290–316 (EAPAAPQPSMSSEERKERWEQGQADYM) are disordered.

The protein belongs to the glycosyltransferase 8 family. Glycogenin subfamily. Part of the GYS1-GYG1 complex, a heterooctamer composed of a tetramer of GYS1 and 2 dimers of GYG1, where each GYS1 protomer binds to one GYG1 subunit (via GYG1 C-terminus); the GYS1 tetramer may dissociate from GYG1 dimers to continue glycogen polymerization on its own. May also form a heterooctamer complex with GYS2. It depends on Mn(2+) as a cofactor. Post-translationally, self-glycosylated by the transfer of glucose residues from UDP-glucose to itself, forming an alpha-1,4-glycan of around 10 residues attached to Tyr-195. Phosphorylated. As to expression, skeletal muscle, heart, to a lesser extent in kidney, lung and brain.

Its subcellular location is the cytoplasm. The protein localises to the nucleus. The catalysed reaction is L-tyrosyl-[glycogenin] + UDP-alpha-D-glucose = alpha-D-glucosyl-L-tyrosyl-[glycogenin] + UDP + H(+). It carries out the reaction [1,4-alpha-D-glucosyl](n)-L-tyrosyl-[glycogenin] + UDP-alpha-D-glucose = [1,4-alpha-D-glucosyl](n+1)-L-tyrosyl-[glycogenin] + UDP + H(+). It participates in glycan biosynthesis; glycogen biosynthesis. Functionally, glycogenin participates in the glycogen biosynthetic process along with glycogen synthase and glycogen branching enzyme. It catalyzes the formation of a short alpha (1,4)-glucosyl chain covalently attached via a glucose 1-O-tyrosyl linkage to internal tyrosine residues and these chains act as primers for the elongation reaction catalyzed by glycogen synthase. The polypeptide is Glycogenin-1 (Mus musculus (Mouse)).